Here is a 406-residue protein sequence, read N- to C-terminus: Vacuole membrane protein 1 (406 aa).

Positions 1–20 are enriched in basic and acidic residues; sequence MAENGKNCDQRRIAMSKDQH. Residues 1–37 form a disordered region; it reads MAENGKNCDQRRIAMSKDQHNGSLTDPSSVHEKKRRD. Position 2 is an N-acetylalanine (alanine 2). Topologically, residues 2–77 are cytoplasmic; sequence AENGKNCDQR…WTSKLWHRQS (76 aa). Residues 78-98 form a helical membrane-spanning segment; it reads IVVSFLLLLAALVATYYVEGA. The Extracellular segment spans residues 99–109; it reads HQQYVQRIEKQ. A helical membrane pass occupies residues 110 to 130; that stretch reads FLLYAYWIGLGILSSVGLGTG. Residues 131-250 are Cytoplasmic-facing; sequence LHTFLLYLGP…ASRAKLAVQK (120 aa). A VTT domain region spans residues 173–316; it reads GAEGAISLWS…FVIVTFSKHI (144 aa). The chain crosses the membrane as a helical span at residues 251–271; the sequence is LVQKVGFFGILACASIPNPLF. Topologically, residues 272-273 are extracellular; that stretch reads DL. A helical membrane pass occupies residues 274-294; that stretch reads AGITCGHFLVPFWTFFGATLI. At 295-305 the chain is on the cytoplasmic side; it reads GKAIIKMHIQK. A helical transmembrane segment spans residues 306 to 326; sequence IFVIVTFSKHIVEQMVTFIGA. Topologically, residues 327 to 363 are extracellular; the sequence is VPGIGPSLQKPFQEYLEAQRQKLHHRSEAGTPQGENW. A helical transmembrane segment spans residues 364 to 384; it reads LSWMFEKLVVAMVCYFVLSII. Topologically, residues 385–406 are cytoplasmic; that stretch reads NSMAQNYAKRIQQRLNSEEKTK.

It belongs to the VMP1 family. Interacts with BECN1. Interacts with TJP1. Interacts with TP53INP2. Interacts with TMEM41B. Interacts with ATP2A2, PLN and SLN; competes with PLN and SLN to prevent them from forming an inhibitory complex with ATP2A2. Interacts with ATG2A.

It is found in the endoplasmic reticulum-Golgi intermediate compartment membrane. It localises to the cell membrane. The protein localises to the vacuole membrane. Its subcellular location is the endoplasmic reticulum membrane. It carries out the reaction a 1,2-diacyl-sn-glycero-3-phospho-L-serine(in) = a 1,2-diacyl-sn-glycero-3-phospho-L-serine(out). The catalysed reaction is cholesterol(in) = cholesterol(out). It catalyses the reaction a 1,2-diacyl-sn-glycero-3-phosphocholine(in) = a 1,2-diacyl-sn-glycero-3-phosphocholine(out). The enzyme catalyses a 1,2-diacyl-sn-glycero-3-phosphoethanolamine(in) = a 1,2-diacyl-sn-glycero-3-phosphoethanolamine(out). Phospholipid scramblase involved in lipid homeostasis and membrane dynamics processes. Has phospholipid scramblase activity toward cholesterol and phosphatidylserine, as well as phosphatidylethanolamine and phosphatidylcholine. Required for autophagosome formation: participates in early stages of autophagosome biogenesis at the endoplasmic reticulum (ER) membrane by reequilibrating the leaflets of the ER as lipids are extracted by ATG2 (ATG2A or ATG2B) to mediate autophagosome assembly. Regulates ATP2A2 activity to control ER-isolation membrane contacts for autophagosome formation. In addition to autophagy, involved in other processes in which phospholipid scramblase activity is required. Modulates ER contacts with lipid droplets, mitochondria and endosomes. Plays an essential role in formation of cell junctions. Upon stress such as bacterial and viral infection, promotes formation of cytoplasmic vacuoles followed by cell death. Involved in the cytoplasmic vacuolization of acinar cells during the early stage of acute pancreatitis. This chain is Vacuole membrane protein 1, found in Mus musculus (Mouse).